The primary structure comprises 480 residues: ATP synthase subunit beta, chloroplastic (480 aa).

161 to 168 (GGAGVGKT) contributes to the ATP binding site.

The protein belongs to the ATPase alpha/beta chains family. As to quaternary structure, F-type ATPases have 2 components, CF(1) - the catalytic core - and CF(0) - the membrane proton channel. CF(1) has five subunits: alpha(3), beta(3), gamma(1), delta(1), epsilon(1). CF(0) has four main subunits: a(1), b(1), b'(1) and c(9-12).

The protein localises to the plastid. It localises to the chloroplast thylakoid membrane. It carries out the reaction ATP + H2O + 4 H(+)(in) = ADP + phosphate + 5 H(+)(out). In terms of biological role, produces ATP from ADP in the presence of a proton gradient across the membrane. The catalytic sites are hosted primarily by the beta subunits. The sequence is that of ATP synthase subunit beta, chloroplastic from Euglena gracilis.